A 326-amino-acid chain; its full sequence is Hairy/enhancer-of-split related with YRPW motif-like protein (326 aa).

Positions 1 to 56 (MKRPRAPSGSDGESDGPIDVGQENDLSQMARPLTTPSPSQMQARKKRRGIIEKRRR) are disordered. The tract at residues 42–111 (QARKKRRGII…GGTGFFDARA (70 aa)) is transcriptional repression and interaction with NCOR1 and SIN3A. One can recognise a bHLH domain in the interval 43-98 (ARKKRRGIIEKRRRDRINSSLSELRRLVPTAFEKQGSSKLEKAEVLQMTVDHLKML). The region spanning 116 to 153 (FRSIGFRECLTEVIRYLGVLEGPSSHADPVRIRLLSHL) is the Orange domain. Disordered regions lie at residues 223 to 260 (HRPA…PPPT) and 272 to 306 (PIPP…PTGR). Positions 292 to 305 (SGSISSPCPSGPTG) are enriched in low complexity.

The protein belongs to the HEY family. Interacts with HES1, HDAC1, NCOR1 and SIN3A. Self-associates. Interacts with GATA4, GATA6, HEY1 and HEY2. In terms of tissue distribution, expressed in heart and at lower levels in brain, lung, muscle, ovary and testis.

Its subcellular location is the nucleus. Functionally, transcriptional repressor which binds preferentially to the canonical E box sequence 5'-CACGTG-3'. Downstream effector of Notch signaling required for cardiovascular development. Specifically required for the Notch-induced endocardial epithelial to mesenchymal transition, which is itself criticial for cardiac valve and septum development. Represses transcription by the cardiac transcriptional activators GATA4 and GATA6. This Mus musculus (Mouse) protein is Hairy/enhancer-of-split related with YRPW motif-like protein (Heyl).